Here is a 258-residue protein sequence, read N- to C-terminus: Enoyl-[acyl-carrier-protein] reductase [NADH] FabI (258 aa).

NAD(+)-binding positions include G13, 19–20 (SI), 67–68 (DV), and L95. A98 contributes to the substrate binding site. Active-site proton acceptor residues include Y148 and Y158. NAD(+) contacts are provided by residues K165 and 194–198 (IRTLA).

It belongs to the short-chain dehydrogenases/reductases (SDR) family. FabI subfamily. In terms of assembly, homotetramer.

It carries out the reaction a 2,3-saturated acyl-[ACP] + NAD(+) = a (2E)-enoyl-[ACP] + NADH + H(+). It functions in the pathway lipid metabolism; fatty acid biosynthesis. Its function is as follows. Catalyzes the reduction of a carbon-carbon double bond in an enoyl moiety that is covalently linked to an acyl carrier protein (ACP). Involved in the elongation cycle of fatty acid which are used in the lipid metabolism. The sequence is that of Enoyl-[acyl-carrier-protein] reductase [NADH] FabI (fabI) from Synechocystis sp. (strain ATCC 27184 / PCC 6803 / Kazusa).